The chain runs to 246 residues: UPF0736 protein GWCH70_0753 (246 aa).

The protein belongs to the UPF0736 family.

The polypeptide is UPF0736 protein GWCH70_0753 (Geobacillus sp. (strain WCH70)).